The primary structure comprises 372 residues: Lipoyl synthase, mitochondrial (372 aa).

[4Fe-4S] cluster is bound by residues Cys-106, Cys-111, Cys-117, Cys-137, Cys-141, Cys-144, and Ser-352. In terms of domain architecture, Radical SAM core spans 122–341 (EYGTATATIM…EKAGNELGFL (220 aa)).

This sequence belongs to the radical SAM superfamily. Lipoyl synthase family. [4Fe-4S] cluster is required as a cofactor.

The protein resides in the mitochondrion. It carries out the reaction [[Fe-S] cluster scaffold protein carrying a second [4Fe-4S](2+) cluster] + N(6)-octanoyl-L-lysyl-[protein] + 2 oxidized [2Fe-2S]-[ferredoxin] + 2 S-adenosyl-L-methionine + 4 H(+) = [[Fe-S] cluster scaffold protein] + N(6)-[(R)-dihydrolipoyl]-L-lysyl-[protein] + 4 Fe(3+) + 2 hydrogen sulfide + 2 5'-deoxyadenosine + 2 L-methionine + 2 reduced [2Fe-2S]-[ferredoxin]. It functions in the pathway protein modification; protein lipoylation via endogenous pathway; protein N(6)-(lipoyl)lysine from octanoyl-[acyl-carrier-protein]: step 2/2. In terms of biological role, catalyzes the radical-mediated insertion of two sulfur atoms into the C-6 and C-8 positions of the octanoyl moiety bound to the lipoyl domains of lipoate-dependent enzymes, thereby converting the octanoylated domains into lipoylated derivatives. The chain is Lipoyl synthase, mitochondrial (lias) from Xenopus laevis (African clawed frog).